Consider the following 494-residue polypeptide: E3 ubiquitin-protein ligase ari-1.1 (494 aa).

The span at 1–30 shows a compositional bias: acidic residues; sequence MSSDDEINMDDSDSSQGEIDDGCMSDDDGI. The tract at residues 1 to 52 is disordered; that stretch reads MSSDDEINMDDSDSSQGEIDDGCMSDDDGIVLESREQNSSDYKDNGEPDNEV. The span at 33–52 shows a compositional bias: basic and acidic residues; the sequence is ESREQNSSDYKDNGEPDNEV. Residues 124 to 331 form a TRIAD supradomain region; sequence GDAECDICCS…SSWYSCNRFD (208 aa). Zn(2+) is bound by residues Cys128, Cys131, Cys142, His144, Cys147, Cys150, Cys169, Cys174, Cys214, Cys219, Cys235, Cys237, Cys242, Cys245, His250, Cys255, Cys282, and Cys285. The RING-type 1 zinc-finger motif lies at 128–174; it reads CDICCSLGELSGLSCNHRACTQCWKAYLTNKIANNAQSEIECMAPNC. The IBR-type zinc finger occupies 194–255; it reads ATYRKLIVAS…GHDWHEPVNC (62 aa). The segment at 282–313 adopts an RING-type 2; atypical zinc-finger fold; that stretch reads CPKCMITIEKDGGCNHMTCKNTACRFEFCWMC. Cys295 is a catalytic residue. Positions 300, 305, 310, 313, 320, and 327 each coordinate Zn(2+). An ariadne domain region spans residues 346–494; that stretch reads RANLQRYLFY…ADQELWVFNE (149 aa).

Belongs to the RBR family. Ariadne subfamily. As to quaternary structure, interacts with ubiquitin-conjugating enzyme E2 ubc-18.

It is found in the nucleus. The protein localises to the cytoplasm. It carries out the reaction [E2 ubiquitin-conjugating enzyme]-S-ubiquitinyl-L-cysteine + [acceptor protein]-L-lysine = [E2 ubiquitin-conjugating enzyme]-L-cysteine + [acceptor protein]-N(6)-ubiquitinyl-L-lysine.. Its activity is regulated as follows. Autoinhibited by the ariadne domain, which masks the second RING-type zinc finger that contains the active site and inhibits the E3 activity. Its function is as follows. E3 ubiquitin-protein transferase, which catalyzes ubiquitination of target proteins together with ubiquitin-conjugating enzyme E2 ubc-18. Acts with ubc-18 to regulate pharyngeal development. The chain is E3 ubiquitin-protein ligase ari-1.1 from Caenorhabditis elegans.